The following is a 615-amino-acid chain: Elongation factor 4 (615 aa).

The tr-type G domain maps to 14-196 (AMIRNFCIIA…EIVRQVPAPV (183 aa)). Residues 26-31 (DHGKST) and 143-146 (NKID) contribute to the GTP site.

The protein belongs to the TRAFAC class translation factor GTPase superfamily. Classic translation factor GTPase family. LepA subfamily.

It is found in the cell membrane. It catalyses the reaction GTP + H2O = GDP + phosphate + H(+). In terms of biological role, required for accurate and efficient protein synthesis under certain stress conditions. May act as a fidelity factor of the translation reaction, by catalyzing a one-codon backward translocation of tRNAs on improperly translocated ribosomes. Back-translocation proceeds from a post-translocation (POST) complex to a pre-translocation (PRE) complex, thus giving elongation factor G a second chance to translocate the tRNAs correctly. Binds to ribosomes in a GTP-dependent manner. This is Elongation factor 4 from Frankia alni (strain DSM 45986 / CECT 9034 / ACN14a).